A 230-amino-acid polypeptide reads, in one-letter code: GDT1-like protein 4 (230 aa).

A run of 6 helical transmembrane segments spans residues 12 to 32, 39 to 59, 71 to 91, 135 to 155, 175 to 195, and 207 to 227; these read LAMT…AILA, LVLA…ATLG, THHI…WDGF, AFLT…NFFG, FGVV…AVIG, and IVAL…YLTS.

The protein belongs to the GDT1 family.

The protein resides in the membrane. The sequence is that of GDT1-like protein 4 from Arabidopsis thaliana (Mouse-ear cress).